Consider the following 156-residue polypeptide: Protein eva-1 homolog A (156 aa).

Residues 40 to 60 (ALYFVSGVCIGLFLTLAALVM) form a helical membrane-spanning segment. Residues 79–100 (DRECSDSSDSEDGSEDTASDLS) are disordered. Residues 84 to 96 (DSSDSEDGSEDTA) are compositionally biased toward acidic residues. T110 is modified (phosphothreonine). S118 carries the post-translational modification Phosphoserine.

Belongs to the EVA1 family.

The protein resides in the endoplasmic reticulum membrane. The protein localises to the lysosome membrane. In terms of biological role, acts as a regulator of programmed cell death, mediating both autophagy and apoptosis. The polypeptide is Protein eva-1 homolog A (Eva1a) (Mus musculus (Mouse)).